The chain runs to 691 residues: TBC1 domain family member 15 (691 aa).

At A2 the chain carries N-acetylalanine. Phosphoserine occurs at positions 23, 70, 205, 213, and 274. The region spanning 346-556 is the Rab-GAP TBC domain; the sequence is GLSHALRKQA…RLWEVMWTEL (211 aa). Phosphoserine occurs at positions 640 and 675. T689 carries the phosphothreonine modification.

Interacts with non-phosphorylated form of RAB8A; phosphorylation of RAB8A at 'Thr-72' disrupts this interaction. Interacts with ARMC12. In terms of tissue distribution, ubiquitous.

The protein localises to the cytoplasm. In terms of biological role, acts as a GTPase activating protein for RAB7A. Does not act on RAB4, RAB5 or RAB6. In Homo sapiens (Human), this protein is TBC1 domain family member 15 (TBC1D15).